Consider the following 207-residue polypeptide: Protein-L-isoaspartate O-methyltransferase (207 aa).

Serine 56 is an active-site residue.

This sequence belongs to the methyltransferase superfamily. L-isoaspartyl/D-aspartyl protein methyltransferase family.

Its subcellular location is the cytoplasm. It catalyses the reaction [protein]-L-isoaspartate + S-adenosyl-L-methionine = [protein]-L-isoaspartate alpha-methyl ester + S-adenosyl-L-homocysteine. Its function is as follows. Catalyzes the methyl esterification of L-isoaspartyl residues in peptides and proteins that result from spontaneous decomposition of normal L-aspartyl and L-asparaginyl residues. It plays a role in the repair and/or degradation of damaged proteins. The polypeptide is Protein-L-isoaspartate O-methyltransferase (Pyrobaculum islandicum (strain DSM 4184 / JCM 9189 / GEO3)).